The sequence spans 412 residues: Putative competence-damage inducible protein (412 aa).

Belongs to the CinA family.

This Bacillus anthracis protein is Putative competence-damage inducible protein.